A 1086-amino-acid polypeptide reads, in one-letter code: Tyrosine-protein kinase receptor svh-2 (1086 aa).

The N-terminal stretch at 1-34 (MVLGSSQSSAKELTTQSSIFRFLVLLLCFTSATG) is a signal peptide. Residues 35-651 (GQINGKLLNG…DKKGSSPGWK (617 aa)) are Extracellular-facing. 5 N-linked (GlcNAc...) asparagine glycosylation sites follow: N276, N299, N461, N554, and N617. Residues 652-672 (IAIAIISVMTIILIVAIIVYY) form a helical membrane-spanning segment. The Cytoplasmic segment spans residues 673–1086 (MRNRFPRIKT…LLSECSETSV (414 aa)). In terms of domain architecture, Protein kinase spans 735–996 (VDKLDPIGQG…SDLVTIIPNV (262 aa)). ATP is bound by residues 741 to 749 (IGQGHYGVV) and K767. Residue D858 is the Proton acceptor of the active site. Y890 is modified (phosphotyrosine). Residues 1056–1086 (AELPSDSPSTSTAIPQSTPYQLLSECSETSV) form a disordered region. Over residues 1061–1086 (DSPSTSTAIPQSTPYQLLSECSETSV) the composition is skewed to polar residues.

This sequence belongs to the protein kinase superfamily. Tyr protein kinase family. As to quaternary structure, interacts (via cytoplasmic domain) with mlk-1. Interacts with shc-1 (via SH2 domain). May interact (when tyrosine-phosphorylated) with tns-1 (via SH2 domain). May be autophosphorylated on Tyr-890 following dimerization. In terms of tissue distribution, expressed in body wall and vulva muscles, pharynx, intestine, excretory canals, distal tip cells and some neurons. Expressed in D-type motor neurons upon axon injury.

It localises to the cell membrane. The catalysed reaction is L-tyrosyl-[protein] + ATP = O-phospho-L-tyrosyl-[protein] + ADP + H(+). Receptor tyrosine kinase which may phosphorylate mlk-1, a component of the mlk-1, mek-1 and kgb-1 pathway. Involved in axon regeneration after injury by promoting the generation of productive and stable growth cones. The protein is Tyrosine-protein kinase receptor svh-2 of Caenorhabditis elegans.